A 339-amino-acid chain; its full sequence is Anthranilate phosphoribosyltransferase (339 aa).

5-phospho-alpha-D-ribose 1-diphosphate is bound by residues glycine 82, 85 to 86 (GD), 92 to 95 (NIST), 110 to 118 (KHGNRGISS), and serine 122. Anthranilate is bound at residue glycine 82. Residue serine 94 participates in Mg(2+) binding. An anthranilate-binding site is contributed by asparagine 113. Arginine 168 contributes to the anthranilate binding site. Residues aspartate 227 and glutamate 228 each contribute to the Mg(2+) site.

Belongs to the anthranilate phosphoribosyltransferase family. Homodimer. The cofactor is Mg(2+).

It carries out the reaction N-(5-phospho-beta-D-ribosyl)anthranilate + diphosphate = 5-phospho-alpha-D-ribose 1-diphosphate + anthranilate. Its pathway is amino-acid biosynthesis; L-tryptophan biosynthesis; L-tryptophan from chorismate: step 2/5. Its function is as follows. Catalyzes the transfer of the phosphoribosyl group of 5-phosphorylribose-1-pyrophosphate (PRPP) to anthranilate to yield N-(5'-phosphoribosyl)-anthranilate (PRA). The polypeptide is Anthranilate phosphoribosyltransferase (Vesicomyosocius okutanii subsp. Calyptogena okutanii (strain HA)).